The chain runs to 316 residues: tRNA dimethylallyltransferase (316 aa).

17–24 is a binding site for ATP; the sequence is GPTASGKT. 19–24 provides a ligand contact to substrate; sequence TASGKT. 3 interaction with substrate tRNA regions span residues 42 to 45, 166 to 170, and 247 to 252; these read DSAL, QRLSR, and RCVGYR.

It belongs to the IPP transferase family. As to quaternary structure, monomer. It depends on Mg(2+) as a cofactor.

The catalysed reaction is adenosine(37) in tRNA + dimethylallyl diphosphate = N(6)-dimethylallyladenosine(37) in tRNA + diphosphate. Functionally, catalyzes the transfer of a dimethylallyl group onto the adenine at position 37 in tRNAs that read codons beginning with uridine, leading to the formation of N6-(dimethylallyl)adenosine (i(6)A). The polypeptide is tRNA dimethylallyltransferase (Salmonella arizonae (strain ATCC BAA-731 / CDC346-86 / RSK2980)).